The primary structure comprises 159 residues: Large ribosomal subunit protein uL11 (159 aa).

Belongs to the universal ribosomal protein uL11 family. In terms of assembly, part of the ribosomal stalk of the 50S ribosomal subunit. Interacts with L10 and the large rRNA to form the base of the stalk. L10 forms an elongated spine to which L12 dimers bind in a sequential fashion forming a multimeric L10(L12)X complex.

Its function is as follows. Forms part of the ribosomal stalk which helps the ribosome interact with GTP-bound translation factors. This is Large ribosomal subunit protein uL11 from Methanococcus maripaludis (strain C6 / ATCC BAA-1332).